We begin with the raw amino-acid sequence, 29 residues long: Glucagon (29 aa).

The protein belongs to the glucagon family.

It is found in the secreted. Its function is as follows. Glucagon plays a key role in glucose metabolism and homeostasis. Regulates blood glucose by increasing gluconeogenesis and decreasing glycolysis. The protein is Glucagon (gcg) of Callorhinchus milii (Ghost shark).